The chain runs to 212 residues: Glycerol-3-phosphate acyltransferase (212 aa).

5 helical membrane passes run 3–23 (ILLA…VIVS), 51–71 (KAAI…VWLA), 78–98 (DVAI…PVFF), 115–135 (AVHP…AFFF), and 139–159 (SLAA…LFGT).

Belongs to the PlsY family. In terms of assembly, probably interacts with PlsX.

The protein localises to the cell inner membrane. The catalysed reaction is an acyl phosphate + sn-glycerol 3-phosphate = a 1-acyl-sn-glycero-3-phosphate + phosphate. Its pathway is lipid metabolism; phospholipid metabolism. Catalyzes the transfer of an acyl group from acyl-phosphate (acyl-PO(4)) to glycerol-3-phosphate (G3P) to form lysophosphatidic acid (LPA). This enzyme utilizes acyl-phosphate as fatty acyl donor, but not acyl-CoA or acyl-ACP. The sequence is that of Glycerol-3-phosphate acyltransferase from Burkholderia multivorans (strain ATCC 17616 / 249).